The following is a 456-amino-acid chain: UPF0496 protein 4 (456 aa).

The chain crosses the membrane as a helical span at residues 205–221; the sequence is SVTVFVCSIFVAVLSGS.

It belongs to the ROH1 family.

Its subcellular location is the membrane. The sequence is that of UPF0496 protein 4 from Oryza sativa subsp. indica (Rice).